We begin with the raw amino-acid sequence, 321 residues long: tRNA U34 carboxymethyltransferase (321 aa).

Carboxy-S-adenosyl-L-methionine is bound by residues Lys90, Trp104, Lys109, Gly129, 151-153, 180-181, Met195, Tyr199, and Arg314; these read DPT and IE.

Belongs to the class I-like SAM-binding methyltransferase superfamily. CmoB family. As to quaternary structure, homotetramer.

It catalyses the reaction carboxy-S-adenosyl-L-methionine + 5-hydroxyuridine(34) in tRNA = 5-carboxymethoxyuridine(34) in tRNA + S-adenosyl-L-homocysteine + H(+). Functionally, catalyzes carboxymethyl transfer from carboxy-S-adenosyl-L-methionine (Cx-SAM) to 5-hydroxyuridine (ho5U) to form 5-carboxymethoxyuridine (cmo5U) at position 34 in tRNAs. In Haemophilus influenzae (strain 86-028NP), this protein is tRNA U34 carboxymethyltransferase.